The chain runs to 574 residues: Cyclomaltodextrinase (574 aa).

6 residues coordinate Ca(2+): asparagine 144, aspartate 146, asparagine 149, aspartate 150, glycine 168, and aspartate 170. The substrate site is built by histidine 243 and arginine 323. The active-site Nucleophile is aspartate 325. The Proton donor role is filled by glutamate 354. Substrate-binding positions include 420 to 421, aspartate 465, and arginine 469; that span reads HD.

The protein belongs to the glycosyl hydrolase 13 family. In terms of assembly, monomer. The cofactor is Ca(2+).

It carries out the reaction cyclomaltodextrin + H2O = linear maltodextrin. Functionally, hydrolyzes cyclodextrins. Can also act on linear maltodextrins, with the exception of maltose. In Thermoanaerobacter pseudethanolicus (strain ATCC 33223 / 39E) (Clostridium thermohydrosulfuricum), this protein is Cyclomaltodextrinase.